Consider the following 944-residue polypeptide: E3 ubiquitin-protein ligase JMJ24 (944 aa).

2 disordered regions span residues 20-40 and 77-103; these read QTRSANGIGNGNGESIPGIPD and ANSAFRANQKKAKRRSSLGETDTYSEG. The 46-residue stretch at 38–83 folds into the WRC domain; the sequence is IPDDLRCKRSDGKQWRCTAMSMADKTVCEKHYIQAKKRAANSAFRA. The short motif at 73 to 80 is the Nuclear localization signal 1 element; the sequence is KKRAANSA. The segment at 217 to 269 adopts a PHD-type; atypical zinc-finger fold; that stretch reads GEICHQCQRKDRERIISCLKCNQRAFCHNCLSARYSEISLEEVEKVCPACRGL. Zn(2+) is bound by residues C220, C223, C234, C237, C243, C246, C263, and C266. The Nuclear localization signal 2 motif lies at 323–330; it reads EKRLREVE. The 253-residue stretch at 621 to 873 folds into the JmjC domain; the sequence is PRLGLLNVAA…ESARLAEEIR (253 aa). Residues 685-703 show a composition bias toward basic and acidic residues; it reads ERVRKTKPVPEEPDQKMSE. Residues 685 to 715 form a disordered region; that stretch reads ERVRKTKPVPEEPDQKMSENESLLSPEQKLR.

This sequence belongs to the JARID1 histone demethylase family. Homodimer. Interacts with RDR2. Binds to CMT3. Associates with the E2 ubiquitin-conjugating enzyme UBC10. Self-ubiquitinates. As to expression, expressed in inflorescences, flowers, roots, siliques, leaves and stems, especially in the vasculature (mainly phloem), with highest levels in floral organs.

It is found in the nucleus. The catalysed reaction is S-ubiquitinyl-[E2 ubiquitin-conjugating enzyme]-L-cysteine + [acceptor protein]-L-lysine = [E2 ubiquitin-conjugating enzyme]-L-cysteine + N(6)-ubiquitinyl-[acceptor protein]-L-lysine.. Functionally, binds histone H3 but seems to have lost demethylase activity probably due to its inability to bind iron Fe(2+). Possesses E3 ubiquitin ligase activity and targets directly CMT3 for proteasomal degradation to initiate destabilization of the heterochromatic state (e.g. CHG cytosine methylation and H3K9me2) of endogenous silenced loci. Required for the removal of repressive H3K9me2 histone marks to facilitate the transcription of AtSN1, AtMu1c, solo LTR and SDC, thus counteracting their transcriptional silencing. Mainly required to promote the basal level transcription of silenced loci such as TE and repeats targeted by RNA-dependent DNA methylation (RdDM) for silencing, a specialized branch of the RNA interference (RNAi) pathway. Also cooperates with RNAi pathways for gene silencing both by contributing to the production of 24-nt siRNA to initiate RdDM and by recruiting RDR2 to enable local transcripts to make dsRNA. Antagonizes histone H3K9 demethylase IBM1/JMJ25 function. This chain is E3 ubiquitin-protein ligase JMJ24, found in Arabidopsis thaliana (Mouse-ear cress).